The chain runs to 471 residues: GDP-fucose protein O-fucosyltransferase 3 (471 aa).

Over 1 to 8 (MNRMWEKK) the chain is Cytoplasmic. The chain crosses the membrane as a helical; Signal-anchor for type II membrane protein span at residues 9 to 29 (FWISCFFIILFFILVTLQVMV). Topologically, residues 30-471 (ELGRFEKRET…EFWNLVFKFQ (442 aa)) are lumenal. N-linked (GlcNAc...) asparagine glycosylation is found at asparagine 102, asparagine 122, asparagine 160, and asparagine 310. Cysteine 381 and cysteine 384 are oxidised to a cystine. A glycan (N-linked (GlcNAc...) asparagine) is linked at asparagine 457.

Belongs to the glycosyltransferase 10 family.

It localises to the endoplasmic reticulum membrane. It catalyses the reaction L-threonyl-[protein] + GDP-beta-L-fucose = 3-O-(alpha-L-fucosyl)-L-threonyl-[protein] + GDP + H(+). The catalysed reaction is L-seryl-[protein] + GDP-beta-L-fucose = 3-O-(alpha-L-fucosyl)-L-seryl-[protein] + GDP + H(+). The protein operates within protein modification; protein glycosylation. Protein O-fucosyltransferase that specifically catalyzes O-fucosylation of serine or threonine residues in EMI domains of target proteins. Attaches fucose through an O-glycosidic linkage. O-fucosylation of EMI domain-containing proteins may be required for facilitating protein folding and secretion. This chain is GDP-fucose protein O-fucosyltransferase 3 (fut10), found in Xenopus tropicalis (Western clawed frog).